The sequence spans 104 residues: ATP-dependent Clp protease adapter protein ClpS (104 aa).

This sequence belongs to the ClpS family. In terms of assembly, binds to the N-terminal domain of the chaperone ClpA.

Its function is as follows. Involved in the modulation of the specificity of the ClpAP-mediated ATP-dependent protein degradation. The polypeptide is ATP-dependent Clp protease adapter protein ClpS (Burkholderia mallei (strain NCTC 10247)).